The following is a 495-amino-acid chain: Glutelin type-B 2 (495 aa).

An N-terminal signal peptide occupies residues 1–24 (MATTIFSRFSIYFCAMLLCQGSMA). 2 disulfide bridges follow: Cys45–Cys78 and Cys121–Cys305. 2 Cupin type-1 domains span residues 50–245 (LQAF…VAAK) and 311–460 (VNIE…EQAR). Residues 464 to 495 (NNRGEEHGAFTPRFQQQYYPGFSNESESETSE) are disordered.

This sequence belongs to the 11S seed storage protein (globulins) family. Hexamer; each subunit is composed of an acidic and a basic chain derived from a single precursor and linked by a disulfide bond.

Functionally, seed storage protein. In Oryza sativa subsp. japonica (Rice), this protein is Glutelin type-B 2 (GLUB2).